Consider the following 426-residue polypeptide: Histidine--tRNA ligase (426 aa).

It belongs to the class-II aminoacyl-tRNA synthetase family. As to quaternary structure, homodimer.

The protein localises to the cytoplasm. The catalysed reaction is tRNA(His) + L-histidine + ATP = L-histidyl-tRNA(His) + AMP + diphosphate + H(+). This chain is Histidine--tRNA ligase, found in Picosynechococcus sp. (strain ATCC 27264 / PCC 7002 / PR-6) (Agmenellum quadruplicatum).